The primary structure comprises 131 residues: Transcription antitermination protein NusB (131 aa).

This sequence belongs to the NusB family.

Involved in transcription antitermination. Required for transcription of ribosomal RNA (rRNA) genes. Binds specifically to the boxA antiterminator sequence of the ribosomal RNA (rrn) operons. The sequence is that of Transcription antitermination protein NusB from Campylobacter fetus subsp. fetus (strain 82-40).